Here is a 143-residue protein sequence, read N- to C-terminus: Crossover junction endodeoxyribonuclease Hjc (143 aa).

A Mg(2+)-binding site is contributed by glutamate 11. Serine 31 is a catalytic residue. Mg(2+)-binding residues include aspartate 41 and glutamate 54.

This sequence belongs to the Holliday junction resolvase Hjc family. In terms of assembly, homodimer. It depends on Mg(2+) as a cofactor.

It carries out the reaction Endonucleolytic cleavage at a junction such as a reciprocal single-stranded crossover between two homologous DNA duplexes (Holliday junction).. Its function is as follows. A structure-specific endonuclease that resolves Holliday junction (HJ) intermediates during genetic recombination. Cleaves 4-way DNA junctions introducing paired nicks in opposing strands, leaving a 5'-terminal phosphate and a 3'-terminal hydroxyl group that are ligated to produce recombinant products. Functionally, redundant function with Holliday junction resolvase Hje. This chain is Crossover junction endodeoxyribonuclease Hjc, found in Sulfolobus acidocaldarius (strain ATCC 33909 / DSM 639 / JCM 8929 / NBRC 15157 / NCIMB 11770).